Consider the following 348-residue polypeptide: Dihydroorotase (348 aa).

H14 and H16 together coordinate Zn(2+). Substrate contacts are provided by residues 16–18 (HLR) and N42. 3 residues coordinate Zn(2+): K100, H137, and H175. Residue K100 is modified to N6-carboxylysine. H137 contributes to the substrate binding site. A substrate-binding site is contributed by L220. D248 is a Zn(2+) binding site. D248 is a catalytic residue. Substrate is bound by residues H252 and A264.

This sequence belongs to the metallo-dependent hydrolases superfamily. DHOase family. Class II DHOase subfamily. As to quaternary structure, homodimer. Zn(2+) serves as cofactor.

It catalyses the reaction (S)-dihydroorotate + H2O = N-carbamoyl-L-aspartate + H(+). It functions in the pathway pyrimidine metabolism; UMP biosynthesis via de novo pathway; (S)-dihydroorotate from bicarbonate: step 3/3. In terms of biological role, catalyzes the reversible cyclization of carbamoyl aspartate to dihydroorotate. This chain is Dihydroorotase, found in Pseudomonas putida (strain W619).